Reading from the N-terminus, the 353-residue chain is MSIEDLARANVRALTPYQSARRLGGKGDVWLNANEFPTAVAFQLTAQTMNRYPEPQPKAVIESYARYADVKPEQVLVSRGADEGIELLIRAFCEPGKDALLYCPPTYGMYSVSAETIGVECRTVPTLADWQLDLPGIEAQLDGVKVVFVCSPNNPTGQIIDPQSIRDLLEMTRDKAIVVADEAYIEFCPQATLAGWLSDYPHLVVVRTLSKAFALAGLRCGFTLANAEVINVLLKVIAPYPLSTPVADIAAQALSAEGIAAMRQRVAQILDERRYLVEQLRGIACVEQVFDSEANYVLARITASSAVFKSLWDQGIILRDQNKQPSLSGCLRITIGTRAESQRVIDALTAENV.

K211 carries the post-translational modification N6-(pyridoxal phosphate)lysine.

It belongs to the class-II pyridoxal-phosphate-dependent aminotransferase family. Histidinol-phosphate aminotransferase subfamily. As to quaternary structure, homodimer. Pyridoxal 5'-phosphate is required as a cofactor.

It catalyses the reaction L-histidinol phosphate + 2-oxoglutarate = 3-(imidazol-4-yl)-2-oxopropyl phosphate + L-glutamate. It participates in amino-acid biosynthesis; L-histidine biosynthesis; L-histidine from 5-phospho-alpha-D-ribose 1-diphosphate: step 7/9. The protein is Histidinol-phosphate aminotransferase of Klebsiella pneumoniae (strain 342).